The chain runs to 101 residues: MELKQIATAGTMESSDIMITLSPNKTGLEIKLQSNVEKQFGQQIRTMIESVLKQFEITNVTVDAVDKGALDCTIKARTIVAVYRGLGKEDYDWEEINKWIA.

At S14 the chain carries O-(phosphoribosyl dephospho-coenzyme A)serine.

Belongs to the CitD family. As to quaternary structure, oligomer with a subunit composition of (alpha,beta,gamma)6.

Its subcellular location is the cytoplasm. Covalent carrier of the coenzyme of citrate lyase. The chain is Citrate lyase acyl carrier protein from Latilactobacillus sakei subsp. sakei (strain 23K) (Lactobacillus sakei subsp. sakei).